A 463-amino-acid chain; its full sequence is Oxidoreductase OXR1 (463 aa).

6-hydroxy-FAD-binding positions include 59 to 63 (GGSYS), Val154, and Asp366.

The protein belongs to the FAD-dependent oxidoreductase family. The cofactor is 6-hydroxy-FAD.

It participates in siderophore biosynthesis. Its function is as follows. Oxidoreductase; part of the gene cluster that mediates the biosynthesis of hydroxamate-containing siderophores that play a critical role in virulence via intracellular iron acquisition during macrophage infection. This chain is Oxidoreductase OXR1, found in Ajellomyces capsulatus (Darling's disease fungus).